A 102-amino-acid polypeptide reads, in one-letter code: PqqA binding protein (102 aa).

Belongs to the PqqD family. As to quaternary structure, monomer. Interacts with PqqE.

The protein operates within cofactor biosynthesis; pyrroloquinoline quinone biosynthesis. Functionally, functions as a PqqA binding protein and presents PqqA to PqqE, in the pyrroloquinoline quinone (PQQ) biosynthetic pathway. This Rhodopseudomonas palustris (strain BisB5) protein is PqqA binding protein.